Here is a 497-residue protein sequence, read N- to C-terminus: Cysteine--tRNA ligase (497 aa).

Cys-34 lines the Zn(2+) pocket. The 'HIGH' region motif lies at 36 to 46 (PTVYDFAHIGN). The Zn(2+) site is built by Cys-243, His-268, and Glu-272. The 'KMSKS' region signature appears at 301–305 (KMAKS). Lys-304 serves as a coordination point for ATP. Residues 478–497 (LMDYKDPETGERRTKWEVKR) are disordered. A compositionally biased stretch (basic and acidic residues) spans 480-497 (DYKDPETGERRTKWEVKR).

It belongs to the class-I aminoacyl-tRNA synthetase family. As to quaternary structure, monomer. Requires Zn(2+) as cofactor.

Its subcellular location is the cytoplasm. It carries out the reaction tRNA(Cys) + L-cysteine + ATP = L-cysteinyl-tRNA(Cys) + AMP + diphosphate. This Chelativorans sp. (strain BNC1) protein is Cysteine--tRNA ligase.